We begin with the raw amino-acid sequence, 31 residues long: Cytochrome b6-f complex subunit 6 (31 aa).

A helical transmembrane segment spans residues I4–G24.

It belongs to the PetL family. The 4 large subunits of the cytochrome b6-f complex are cytochrome b6, subunit IV (17 kDa polypeptide, PetD), cytochrome f and the Rieske protein, while the 4 small subunits are PetG, PetL, PetM and PetN. The complex functions as a dimer.

Its subcellular location is the plastid. It localises to the chloroplast thylakoid membrane. Its function is as follows. Component of the cytochrome b6-f complex, which mediates electron transfer between photosystem II (PSII) and photosystem I (PSI), cyclic electron flow around PSI, and state transitions. PetL is important for photoautotrophic growth as well as for electron transfer efficiency and stability of the cytochrome b6-f complex. This Citrus sinensis (Sweet orange) protein is Cytochrome b6-f complex subunit 6.